Consider the following 242-residue polypeptide: Pyridoxine 5'-phosphate synthase (242 aa).

N6 provides a ligand contact to 3-amino-2-oxopropyl phosphate. A 1-deoxy-D-xylulose 5-phosphate-binding site is contributed by 8–9 (DH). R17 contributes to the 3-amino-2-oxopropyl phosphate binding site. Residue H42 is the Proton acceptor of the active site. 1-deoxy-D-xylulose 5-phosphate-binding residues include R44 and H49. E69 acts as the Proton acceptor in catalysis. 1-deoxy-D-xylulose 5-phosphate is bound at residue T99. Catalysis depends on H193, which acts as the Proton donor. Residues G194 and 217 to 218 (GH) each bind 3-amino-2-oxopropyl phosphate.

The protein belongs to the PNP synthase family. As to quaternary structure, homooctamer; tetramer of dimers.

It is found in the cytoplasm. The enzyme catalyses 3-amino-2-oxopropyl phosphate + 1-deoxy-D-xylulose 5-phosphate = pyridoxine 5'-phosphate + phosphate + 2 H2O + H(+). It participates in cofactor biosynthesis; pyridoxine 5'-phosphate biosynthesis; pyridoxine 5'-phosphate from D-erythrose 4-phosphate: step 5/5. Functionally, catalyzes the complicated ring closure reaction between the two acyclic compounds 1-deoxy-D-xylulose-5-phosphate (DXP) and 3-amino-2-oxopropyl phosphate (1-amino-acetone-3-phosphate or AAP) to form pyridoxine 5'-phosphate (PNP) and inorganic phosphate. This is Pyridoxine 5'-phosphate synthase from Aquifex aeolicus (strain VF5).